Consider the following 330-residue polypeptide: MATGQRLMRAIRVSEFGGPEVLKLQSDVAVPIPEEHQVLIKVQACGVNPVDTYIRSGTYSRKPRLPYTPGLDVAGLIEAVGERVSAFKKGDRVFTTSTVSGGYAEYALAADHTVYKLPGELDFQKGAAIGVPYFTAYRALLHSACAKAGESVLVHGASGGVGLAACQIARACCFKVLGTAGTEEGQRVVLQNGAHEVFNHREDINIDKIKKSVGEKGIDVIIEMLANVNLSNDLNLLSQGGRVIIVGSKGPVEINPRDTMTKESSIKGVTLFSSTKEEFQQFAAALQAGMEIGWLRPVIGSQYPLEKVAQAHEDLTHSSGAAGKVVLLLK.

The residue at position 2 (alanine 2) is an N-acetylalanine. Position 23 is an N6-acetyllysine (lysine 23). NADP(+)-binding positions include tyrosine 53, serine 158 to valine 161, glycine 181, histidine 200, asparagine 229, valine 246 to lysine 249, and valine 269 to leucine 271. Serine 248 carries the phosphoserine modification.

It belongs to the zinc-containing alcohol dehydrogenase family. Quinone oxidoreductase subfamily. Homotetramer.

The protein localises to the cytoplasm. It carries out the reaction 2 a quinone + NADPH + H(+) = 2 a 1,4-benzosemiquinone + NADP(+). Functionally, does not have alcohol dehydrogenase activity. Binds NADP and acts through a one-electron transfer process. Orthoquinones, such as 1,2-naphthoquinone or 9,10-phenanthrenequinone, are the best substrates (in vitro). May act in the detoxification of xenobiotics. Interacts with (AU)-rich elements (ARE) in the 3'-UTR of target mRNA species and enhances their stability. NADPH binding interferes with mRNA binding. This chain is Quinone oxidoreductase (CRYZ), found in Lama guanicoe (Guanaco).